The primary structure comprises 78 residues: Omega-conotoxin-like SO-4 (78 aa).

Positions 1–22 (MKLTCMVIVAVLLLTACQLITA) are cleaved as a signal peptide. A propeptide spanning residues 23–42 (DDSRGTQKHRSLRSTTKVSK) is cleaved from the precursor. 3 cysteine pairs are disulfide-bonded: cysteine 46-cysteine 62, cysteine 53-cysteine 65, and cysteine 61-cysteine 72.

It belongs to the conotoxin O1 superfamily. In terms of tissue distribution, expressed by the venom duct.

It is found in the secreted. Omega-conotoxins act at presynaptic membranes, they bind and block voltage-gated calcium channels (Cav). This is Omega-conotoxin-like SO-4 (SO4) from Conus striatus (Striated cone).